The primary structure comprises 793 residues: MNRKVGPVLEYSRRFSRVLCALRDEIRDPLQYGYQRVNTAEGSLSTSTTATSLDTIVLDTNAEDLASVPPRTLQHHQPQRTFSPILETDDTNPFLEPVEKAKSKSSLKSSRVSFDQEDDRFDEDENSFRKQREHFQKHKSHSTSEHKSQLIKELRHLLATDNRRQFQGKKHVSLDVKSAKVLEQLLKASSSSDDFEGQRKEFQERKHKSLDARHISFKFDKEPSPSSSDEDFEPSTSLLRIDADITKPVIIDLKDLDSSDEEDYISSRKHFQQSKSMSTDSRKSIRFLEMEMGTKEENMRTAVPFVRQITEEGKPKLEVYRPTTNPIYIWTQVLAALSVSLGSMVVGFSSAYTSPALVSMKDRNITSFEVTDQSGSWVGGIMPLAGLAGGILGGPMIEYLGRKNTILATATPFIISWLLIGCATHVAMVLVGRALSGLCVGIASLSLPVYLGETVQPEVRGTLGLLPTAFGNIGILLCFVAGKYLDWSGLAFLGAALPIPFLLLMFLIPETPRWYVSRNREDRARKALQWLRGRKADVEPELKGISKSHQDAERHASSSAMLDLLNKANLKPLLISLGLMFFQQLSGINAVIFYTVQIFQSAGSTIDEKLCTIIVGVVNFIATFIATVLIDRLGRKILLYISDVAMIITLMTLGTFFYMKNNGDDVSEIGWLPLAAFVVFVVGFSLGFGPIPWLMMGEILPGKIRGSAASVATAFNWSCTFVVTKTFADITASIGNHGAFWMFGSICIVGLLFVIVYVPETQGKSLEDIERKMMGRVRRMSSVANIKPLSFNM.

The Cytoplasmic portion of the chain corresponds to 1–326; it reads MNRKVGPVLE…LEVYRPTTNP (326 aa). 2 disordered regions span residues 99–148 and 213–235; these read EKAK…EHKS and RHIS…FEPS. Positions 104-113 are enriched in low complexity; that stretch reads KSSLKSSRVS. Positions 115–125 are enriched in acidic residues; that stretch reads DQEDDRFDEDE. Residues 213–223 are compositionally biased toward basic and acidic residues; sequence RHISFKFDKEP. Residues 327–347 form a helical membrane-spanning segment; that stretch reads IYIWTQVLAALSVSLGSMVVG. The Extracellular segment spans residues 348–376; it reads FSSAYTSPALVSMKDRNITSFEVTDQSGS. N364 carries an N-linked (GlcNAc...) asparagine glycan. A helical transmembrane segment spans residues 377-397; it reads WVGGIMPLAGLAGGILGGPMI. The Cytoplasmic portion of the chain corresponds to 398–411; that stretch reads EYLGRKNTILATAT. Residues 412 to 432 traverse the membrane as a helical segment; sequence PFIISWLLIGCATHVAMVLVG. Residues 433–434 are Extracellular-facing; the sequence is RA. The helical transmembrane segment at 435 to 455 threads the bilayer; it reads LSGLCVGIASLSLPVYLGETV. Residues 456 to 460 are Cytoplasmic-facing; sequence QPEVR. A helical transmembrane segment spans residues 461 to 481; the sequence is GTLGLLPTAFGNIGILLCFVA. Over 482-488 the chain is Extracellular; that stretch reads GKYLDWS. The helical transmembrane segment at 489–509 threads the bilayer; that stretch reads GLAFLGAALPIPFLLLMFLIP. Residues 510–572 are Cytoplasmic-facing; it reads ETPRWYVSRN…DLLNKANLKP (63 aa). Residues 573–593 traverse the membrane as a helical segment; sequence LLISLGLMFFQQLSGINAVIF. The Extracellular segment spans residues 594–609; it reads YTVQIFQSAGSTIDEK. The helical transmembrane segment at 610 to 630 threads the bilayer; that stretch reads LCTIIVGVVNFIATFIATVLI. Residues 631 to 636 are Cytoplasmic-facing; sequence DRLGRK. Residues 637–657 form a helical membrane-spanning segment; the sequence is ILLYISDVAMIITLMTLGTFF. The Extracellular portion of the chain corresponds to 658 to 668; the sequence is YMKNNGDDVSE. A helical membrane pass occupies residues 669–689; sequence IGWLPLAAFVVFVVGFSLGFG. Residues 690 to 703 are Cytoplasmic-facing; sequence PIPWLMMGEILPGK. A helical transmembrane segment spans residues 704-724; that stretch reads IRGSAASVATAFNWSCTFVVT. Residues 725–737 are Extracellular-facing; sequence KTFADITASIGNH. The chain crosses the membrane as a helical span at residues 738 to 758; sequence GAFWMFGSICIVGLLFVIVYV. The Cytoplasmic segment spans residues 759 to 793; sequence PETQGKSLEDIERKMMGRVRRMSSVANIKPLSFNM.

It belongs to the major facilitator superfamily. Sugar transporter (TC 2.A.1.1) family. Trehalose transporter subfamily.

The protein resides in the cell membrane. In terms of biological role, high-capacity facilitative transporter for trehalose. Does not transport maltose, sucrose or lactose. Mediates the bidirectional transfer of trehalose. Responsible for the transport of trehalose synthesized in the fat body and the incorporation of trehalose into other tissues that require a carbon source, thereby regulating trehalose levels in the hemolymph. This Anopheles gambiae (African malaria mosquito) protein is Facilitated trehalose transporter Tret1.